The following is a 49-amino-acid chain: Large ribosomal subunit protein bL33 (49 aa).

It belongs to the bacterial ribosomal protein bL33 family.

This chain is Large ribosomal subunit protein bL33 (rpmG), found in Thermotoga maritima (strain ATCC 43589 / DSM 3109 / JCM 10099 / NBRC 100826 / MSB8).